Reading from the N-terminus, the 84-residue chain is Large ribosomal subunit protein bL27 (84 aa).

A disordered region spans residues 1–22 (MAHKKGGGSTKNGRDSNPKYLG).

This sequence belongs to the bacterial ribosomal protein bL27 family.

The protein is Large ribosomal subunit protein bL27 of Prosthecochloris aestuarii (strain DSM 271 / SK 413).